We begin with the raw amino-acid sequence, 79 residues long: Schistosomin (79 aa).

Contains four disulfide bonds. Growth-controlling neurosecretory light green cells, in the cerebral ganglia of the CNS.

The protein resides in the secreted. In terms of biological role, anti-gonadotropic neuropeptide. It also decreases the binding capacity of calfluxin to membrane-bound receptors of the albumen gland. This leads to inhibition of the reproductive activities of the infected snail. The sequence is that of Schistosomin from Lymnaea stagnalis (Great pond snail).